The following is a 56-amino-acid chain: Large ribosomal subunit protein bL33 (56 aa).

Belongs to the bacterial ribosomal protein bL33 family.

The protein is Large ribosomal subunit protein bL33 of Vibrio campbellii (strain ATCC BAA-1116).